Consider the following 205-residue polypeptide: FMN-dependent NADH:quinone oxidoreductase (205 aa).

Residues Ser10, 16-18, and 96-99 contribute to the FMN site; these read SHS and MYNF.

This sequence belongs to the azoreductase type 1 family. Homodimer. The cofactor is FMN.

It catalyses the reaction 2 a quinone + NADH + H(+) = 2 a 1,4-benzosemiquinone + NAD(+). The enzyme catalyses N,N-dimethyl-1,4-phenylenediamine + anthranilate + 2 NAD(+) = 2-(4-dimethylaminophenyl)diazenylbenzoate + 2 NADH + 2 H(+). In terms of biological role, quinone reductase that provides resistance to thiol-specific stress caused by electrophilic quinones. Also exhibits azoreductase activity. Catalyzes the reductive cleavage of the azo bond in aromatic azo compounds to the corresponding amines. In Nostoc punctiforme (strain ATCC 29133 / PCC 73102), this protein is FMN-dependent NADH:quinone oxidoreductase.